The following is a 77-amino-acid chain: Neurexophilin-4 (77 aa).

The segment at 1-77 is v (Cys-rich); sequence NCHVEYEKTN…NFQSEHPYFG (77 aa).

Belongs to the neurexophilin family. Post-translationally, may be proteolytically processed at the boundary between the N-terminal non-conserved and the central conserved domain in neuron-like cells.

It is found in the secreted. May be signaling molecules that resemble neuropeptides and that act by binding to alpha-neurexins and possibly other receptors. This chain is Neurexophilin-4 (NXPH4), found in Macaca mulatta (Rhesus macaque).